The sequence spans 579 residues: Cyclin-T1-5 (579 aa).

2 disordered regions span residues 1–27 and 271–419; these read MAGV…HEKQ and RVPA…GDAL. Positions 11 to 20 are enriched in polar residues; it reads YSESGVSSHS. The segment covering 274–283 has biased composition (low complexity); that stretch reads ASQGSEVESS. A compositionally biased stretch (polar residues) spans 306-334; it reads SRQTSSVRSTHEQSNSDNHGGSSKGVLNQ. 2 stretches are compositionally biased toward basic and acidic residues: residues 349–380 and 389–414; these read DNKE…EAPH and PGKD…RNVD. Ser423 bears the Phosphoserine mark. 3 stretches are compositionally biased toward basic and acidic residues: residues 474–512, 538–556, and 563–579; these read DEKT…KNTE, KQSE…ESHK, and HHGD…NNHS. The segment at 474-579 is disordered; the sequence is DEKTKERKVQ…RRHSQENNHS (106 aa).

It belongs to the cyclin family. Cyclin T subfamily.

The polypeptide is Cyclin-T1-5 (CYCT1-5) (Arabidopsis thaliana (Mouse-ear cress)).